A 555-amino-acid chain; its full sequence is CTP synthase (555 aa).

The interval 1 to 265 (MTRYIFITGG…GNRVCEKLNI (265 aa)) is amidoligase domain. Ser-13 provides a ligand contact to CTP. Position 13 (Ser-13) interacts with UTP. Residues 14-19 (SLGKGI) and Asp-71 contribute to the ATP site. Residues Asp-71 and Glu-139 each coordinate Mg(2+). Residues 146–148 (DIE), 186–191 (KTKPTQ), and Lys-222 contribute to the CTP site. Residues 186–191 (KTKPTQ) and Lys-222 each bind UTP. In terms of domain architecture, Glutamine amidotransferase type-1 spans 290–541 (TVAVVGKYVD…IKAGLAAKEA (252 aa)). L-glutamine is bound at residue Gly-351. The active-site Nucleophile; for glutamine hydrolysis is Cys-378. Residues 379-382 (LGMQ), Glu-402, and Arg-469 contribute to the L-glutamine site. Catalysis depends on residues His-514 and Glu-516.

It belongs to the CTP synthase family. As to quaternary structure, homotetramer.

It catalyses the reaction UTP + L-glutamine + ATP + H2O = CTP + L-glutamate + ADP + phosphate + 2 H(+). The enzyme catalyses L-glutamine + H2O = L-glutamate + NH4(+). The catalysed reaction is UTP + NH4(+) + ATP = CTP + ADP + phosphate + 2 H(+). Its pathway is pyrimidine metabolism; CTP biosynthesis via de novo pathway; CTP from UDP: step 2/2. With respect to regulation, allosterically activated by GTP, when glutamine is the substrate; GTP has no effect on the reaction when ammonia is the substrate. The allosteric effector GTP functions by stabilizing the protein conformation that binds the tetrahedral intermediate(s) formed during glutamine hydrolysis. Inhibited by the product CTP, via allosteric rather than competitive inhibition. Catalyzes the ATP-dependent amination of UTP to CTP with either L-glutamine or ammonia as the source of nitrogen. Regulates intracellular CTP levels through interactions with the four ribonucleotide triphosphates. The chain is CTP synthase from Coxiella burnetii (strain Dugway 5J108-111).